The following is a 461-amino-acid chain: MQRVNMIMAESPGLITICLLGYLLSAECTVFLDHENANKILNRPKRYNSGKLEEFVQGNLERECMEEKCSFEEAREVFENTERTTEFWKQYVDGDQCESNPCLNGGSCKDDINSYECWCPFGFEGKNCELDVTCNIKNGRCEQFCKNSADNKVVCSCTEGYRLAENQKSCEPAVPFPCGRVSVSQTSKLTRAETVFPDVDYVNSTEAETILDNITQSTQSFNDFTRVVGGEDAKPGQFPWQVVLNGKVDAFCGGSIVNEKWIVTAAHCVDTGVKITVVAGEHNIEETEHTEQKRNVIRIIPHHNYNAAINKYNHDIALLELDEPLVLNSYVTPICIADKEYTNIFLKFGSGYVSGWGRVFHKGRSALVLQYLRVPLVDRATCLRSTKFTIYNNMFCAGFHEGGRDSCQGDSGGPHVTEVEGTSFLTGIISWGEECAMKGKYGIYTKVSRYVNWIKEKTKLT.

The signal sequence occupies residues 1 to 28 (MQRVNMIMAESPGLITICLLGYLLSAEC). A propeptide spanning residues 29 to 46 (TVFLDHENANKILNRPKR) is cleaved from the precursor. Residues Y47, N48, E53, E54, E61, E63, E66, E67, E72, E73, and E76 each coordinate Ca(2+). The region spanning 47–92 (YNSGKLEEFVQGNLERECMEEKCSFEEAREVFENTERTTEFWKQYV) is the Gla domain. A 4-carboxyglutamate mark is found at E53, E54, E61, E63, E66, E67, E72, E73, E76, E79, and E82. A Mg(2+)-binding site is contributed by E61. An intrachain disulfide couples C64 to C69. E66 contacts Mg(2+). E72 contributes to the Mg(2+) binding site. E76 lines the Mg(2+) pocket. E82 serves as a coordination point for Ca(2+). E82 serves as a coordination point for Mg(2+). T85 carries O-linked (GalNAc...) threonine glycosylation. 4 residues coordinate Ca(2+): E86, D93, G94, and Q96. E86 carries the 4-carboxyglutamate modification. Residue E86 coordinates Mg(2+). The EGF-like 1; calcium-binding domain occupies 93 to 129 (DGDQCESNPCLNGGSCKDDINSYECWCPFGFEGKNCE). Disulfide bonds link C97-C108, C102-C117, C119-C128, C134-C145, C141-C155, C157-C170, C178-C335, C252-C268, C382-C396, and C407-C435. Residue S99 is glycosylated (O-linked (Glc...) serine). O-linked (Fuc...) serine glycosylation occurs at S107. Ca(2+) is bound by residues D110 and D111. The residue at position 110 (D110) is a (3R)-3-hydroxyaspartate. Position 114 is a phosphoserine (S114). One can recognise an EGF-like 2 domain in the interval 130–171 (LDVTCNIKNGRCEQFCKNSADNKVVCSCTEGYRLAENQKSCE). The propeptide at 192–226 (AETVFPDVDYVNSTEAETILDNITQSTQSFNDFTR) is activation peptide. Position 201 is a sulfotyrosine (Y201). S204 is subject to Phosphoserine. Residue T205 is modified to Phosphothreonine; alternate. A glycan (O-linked (GalNAc...) threonine; alternate) is linked at T205. A glycan (N-linked (GlcNAc...) asparagine) is linked at N213. Residues T215 and T225 are each glycosylated (O-linked (GalNAc...) threonine). A Peptidase S1 domain is found at 227-459 (VVGGEDAKPG…YVNWIKEKTK (233 aa)). H267 acts as the Charge relay system in catalysis. Ca(2+) is bound by residues E281, N283, E286, E288, and E291. Catalysis depends on D315, which acts as the Charge relay system. S411 acts as the Charge relay system in catalysis.

Belongs to the peptidase S1 family. Heterodimer of a light chain and a heavy chain; disulfide-linked. Interacts (inactive and activated) with F11 (activated) in calcium-dependent manner. Interacts with SERPINC1. Post-translationally, activated by factor XIa, which excises the activation peptide. The propeptide can also be removed by snake venom protease. In terms of processing, the iron and 2-oxoglutarate dependent 3-hydroxylation of aspartate and asparagine is (R) stereospecific within EGF domains. Activated by coagulation factor VIIa-tissue factor (F7-F3) complex in calcium-dependent manner. Predominantly O-glucosylated at Ser-99 by POGLUT1 in vitro.

Its subcellular location is the secreted. The enzyme catalyses Selective cleavage of Arg-|-Ile bond in factor X to form factor Xa.. Factor IX is a vitamin K-dependent plasma protein that participates in the intrinsic pathway of blood coagulation by converting factor X to its active form in the presence of Ca(2+) ions, phospholipids, and factor VIIIa. This Pan troglodytes (Chimpanzee) protein is Coagulation factor IX (F9).